A 288-amino-acid chain; its full sequence is Acetyl-coenzyme A carboxylase carboxyl transferase subunit beta (288 aa).

Residues 34–288 (LFAKCPACKH…HLVAFHGGGQ (255 aa)) enclose the CoA carboxyltransferase N-terminal domain. Zn(2+) contacts are provided by Cys38, Cys41, Cys56, and Cys59. Residues 38-59 (CPACKHMIYKKDLGLAKICPTC) form a C4-type zinc finger.

This sequence belongs to the AccD/PCCB family. In terms of assembly, acetyl-CoA carboxylase is a heterohexamer composed of biotin carboxyl carrier protein (AccB), biotin carboxylase (AccC) and two subunits each of ACCase subunit alpha (AccA) and ACCase subunit beta (AccD). Zn(2+) is required as a cofactor.

It is found in the cytoplasm. The enzyme catalyses N(6)-carboxybiotinyl-L-lysyl-[protein] + acetyl-CoA = N(6)-biotinyl-L-lysyl-[protein] + malonyl-CoA. It participates in lipid metabolism; malonyl-CoA biosynthesis; malonyl-CoA from acetyl-CoA: step 1/1. In terms of biological role, component of the acetyl coenzyme A carboxylase (ACC) complex. Biotin carboxylase (BC) catalyzes the carboxylation of biotin on its carrier protein (BCCP) and then the CO(2) group is transferred by the transcarboxylase to acetyl-CoA to form malonyl-CoA. This Streptococcus pyogenes serotype M3 (strain ATCC BAA-595 / MGAS315) protein is Acetyl-coenzyme A carboxylase carboxyl transferase subunit beta.